Consider the following 562-residue polypeptide: Potassium-transporting ATPase potassium-binding subunit (562 aa).

A run of 12 helical transmembrane segments spans residues 6–26, 62–82, 132–152, 175–195, 253–273, 283–303, 327–347, 356–376, 379–399, 416–436, 483–503, and 524–544; these read FLLI…LGGF, YALA…VLLM, GLTV…FALI, LYVL…QGVL, FVQM…FGQV, LIWA…YAEL, FGIL…CGAV, ALGG…FGGV, GLYG…LMIG, MTAL…ALAL, LLLA…VLAI, and GLLF…LTFI.

Belongs to the KdpA family. As to quaternary structure, the system is composed of three essential subunits: KdpA, KdpB and KdpC.

The protein localises to the cell inner membrane. Part of the high-affinity ATP-driven potassium transport (or Kdp) system, which catalyzes the hydrolysis of ATP coupled with the electrogenic transport of potassium into the cytoplasm. This subunit binds the periplasmic potassium ions and delivers the ions to the membrane domain of KdpB through an intramembrane tunnel. The polypeptide is Potassium-transporting ATPase potassium-binding subunit (Yersinia pestis bv. Antiqua (strain Antiqua)).